The primary structure comprises 163 residues: Photosystem II extrinsic protein V (163 aa).

Positions 1–26 (MFRRLIGVVVATALLTFQLIVGSATA) are cleaved as a signal peptide. Heme c is bound by residues C63, C66, H67, and H118.

Belongs to the cytochrome c family. PsbV subfamily. PSII is composed of 1 copy each of membrane proteins PsbA, PsbB, PsbC, PsbD, PsbE, PsbF, PsbH, PsbI, PsbJ, PsbK, PsbL, PsbM, PsbT, PsbX, PsbY, PsbZ, Psb30/Ycf12, peripheral proteins PsbO, CyanoQ (PsbQ), PsbU, PsbV and a large number of cofactors. It forms dimeric complexes. Requires heme c as cofactor.

The protein localises to the cellular thylakoid membrane. Functionally, one of the extrinsic, lumenal subunits of photosystem II (PSII). PSII is a light-driven water plastoquinone oxidoreductase, using light energy to abstract electrons from H(2)O, generating a proton gradient subsequently used for ATP formation. The extrinsic proteins stabilize the structure of photosystem II oxygen-evolving complex (OEC), the ion environment of oxygen evolution and protect the OEC against heat-induced inactivation. Low-potential cytochrome c that plays a role in the OEC of PSII. This chain is Photosystem II extrinsic protein V, found in Nostoc sp. (strain PCC 7120 / SAG 25.82 / UTEX 2576).